A 405-amino-acid polypeptide reads, in one-letter code: MKSSIDILPDGSITTPKGFKAGAIYAGIKKKSKNNLDLAILYSDTPCIAAGIFTTNKFRAAPVYISEHNLGFTDNRAIVVNSGCANAGTGEAGMADAIEMVKATAESLNMQPKDVLIASTGVIGHRLPIDKIKENVRLIGLSQRNGHEFARAIMTTDTRSKEIAVQVNIEGFQFYIAGAAKGAGMIHPNMATMLGFITTDASVSKEFLQFALKEAADVSFNMITVDGDTSTNDSLFMLSNGQAENPTFAGNTEYSLVFQQALTIVCQNLAKSIARDGEGAKRLIEIQVEGAANLEDARLIARVIAGSPLVKTAVHGADPNWGRILAAAGRAGADFDIDMVDLYLGESPVLLKGARTGVDEKELSSWLRQVEVIIKLNLNLGQGKAAAWGCDLSAEYVKINADYTT.

Thr-155, Lys-181, Thr-192, Glu-278, Asn-400, and Thr-405 together coordinate substrate. Thr-192 acts as the Nucleophile in catalysis.

The protein belongs to the ArgJ family. As to quaternary structure, heterotetramer of two alpha and two beta chains.

Its subcellular location is the cytoplasm. The catalysed reaction is N(2)-acetyl-L-ornithine + L-glutamate = N-acetyl-L-glutamate + L-ornithine. It carries out the reaction L-glutamate + acetyl-CoA = N-acetyl-L-glutamate + CoA + H(+). It participates in amino-acid biosynthesis; L-arginine biosynthesis; L-ornithine and N-acetyl-L-glutamate from L-glutamate and N(2)-acetyl-L-ornithine (cyclic): step 1/1. Its pathway is amino-acid biosynthesis; L-arginine biosynthesis; N(2)-acetyl-L-ornithine from L-glutamate: step 1/4. In terms of biological role, catalyzes two activities which are involved in the cyclic version of arginine biosynthesis: the synthesis of N-acetylglutamate from glutamate and acetyl-CoA as the acetyl donor, and of ornithine by transacetylation between N(2)-acetylornithine and glutamate. The sequence is that of Arginine biosynthesis bifunctional protein ArgJ from Dehalococcoides mccartyi (strain CBDB1).